We begin with the raw amino-acid sequence, 450 residues long: Glucose-6-phosphate isomerase (450 aa).

T39 carries the post-translational modification Phosphothreonine. The active-site Proton donor is E291. Catalysis depends on residues H312 and K426.

This sequence belongs to the GPI family.

The protein resides in the cytoplasm. The enzyme catalyses alpha-D-glucose 6-phosphate = beta-D-fructose 6-phosphate. Its pathway is carbohydrate biosynthesis; gluconeogenesis. The protein operates within carbohydrate degradation; glycolysis; D-glyceraldehyde 3-phosphate and glycerone phosphate from D-glucose: step 2/4. In terms of biological role, catalyzes the reversible isomerization of glucose-6-phosphate to fructose-6-phosphate. The sequence is that of Glucose-6-phosphate isomerase from Bacillus cereus (strain G9842).